The sequence spans 566 residues: Macrophage colony-stimulating factor 1 (566 aa).

Residues 1–32 (MTARGAAGRCPSSTWMGSRLLLVCLLVSRSVA) form the signal peptide. The Extracellular portion of the chain corresponds to 33–508 (EVSEHCSHMI…SSIQDPQTSA (476 aa)). N106, N153, and N171 each carry an N-linked (GlcNAc...) asparagine glycan. Disordered regions lie at residues 197–417 (PSSD…KLLP) and 434–484 (GKKS…GAAR). Residues 253-265 (PRSTCQTLESTEQ) are compositionally biased toward polar residues. Residue S302 is glycosylated (O-linked (Xyl...) (chondroitin sulfate) serine). Positions 348–360 (DQQPTNITDTPLT) are enriched in polar residues. N353 is a glycosylation site (N-linked (GlcNAc...) asparagine). 2 O-linked (GalNAc...) threonine glycosylation sites follow: T355 and T357. Positions 377-394 (EKTDGSSTLREDQQEPRS) are enriched in basic and acidic residues. A compositionally biased stretch (polar residues) spans 400–410 (LNPQRVGNSAT). Basic and acidic residues predominate over residues 434-445 (GKKSTRDRRSPA). A helical transmembrane segment spans residues 509 to 531 (FVFWVLGIILVLLAVGGLLFYSW). Over 532–566 (KRRSHRDPRTLDSSVGRPEGSSLAQDEDRQVELPV) the chain is Cytoplasmic. The segment at 538–566 (DPRTLDSSVGRPEGSSLAQDEDRQVELPV) is disordered. Positions 557-566 (DEDRQVELPV) are enriched in basic and acidic residues.

As to quaternary structure, homodimer or heterodimer; disulfide-linked. Likely to exist in multiple forms: homodimer consisting of 2 identical 150-200 kDa proteoglycan subunits, heterodimer consisting of a 150-200 kDa proteoglycan subunit and a truncated 43 kDa subunit, and a homodimer consisting of 2 identical 43 kDa subunits. Interacts with CSF1R. N-glycosylated. Post-translationally, O-glycosylated; contains chondroitin sulfate.

The protein localises to the cell membrane. It localises to the secreted. The protein resides in the extracellular space. In terms of biological role, cytokine that plays an essential role in the regulation of survival, proliferation and differentiation of hematopoietic precursor cells, especially mononuclear phagocytes, such as macrophages and monocytes. Promotes the release of pro-inflammatory chemokines, and thereby plays an important role in innate immunity and in inflammatory processes. Plays an important role in the regulation of osteoclast proliferation and differentiation, the regulation of bone resorption, and is required for normal bone development. Required for normal male and female fertility. Promotes reorganization of the actin cytoskeleton, regulates formation of membrane ruffles, cell adhesion and cell migration. Plays a role in lipoprotein clearance. The sequence is that of Macrophage colony-stimulating factor 1 (Csf1) from Rattus norvegicus (Rat).